A 388-amino-acid chain; its full sequence is Pepsin A-2/A-3 (388 aa).

A signal peptide spans 1–15 (MKWLLLLGLVALSEC). Propeptides (activation peptide) lie at residues 16-40 (IIHKVPLVRKKSLRRNLSEHGLLKD) and 41-62 (FLKKHNFNPASKYFPQAEAPTL). One can recognise a Peptidase A1 domain in the interval 76–385 (YFGTIGIGTP…DRANNQVGLA (310 aa)). Residue D94 is part of the active site. The cysteines at positions 107 and 112 are disulfide-linked. S130 is subject to Phosphoserine. Cysteines 268 and 272 form a disulfide. The active site involves D277. A disulfide bridge links C311 with C344.

It belongs to the peptidase A1 family. Pepsin A-2 is phosphorylated, but not pepsin A-3. In terms of processing, each pepsinogen is converted to corresponding pepsin at pH 2.0 in part as a result of the release of a 47 AA activation segment and in part as a result of stepwise proteolytic cleavage via an intermediate form(s).

It localises to the secreted. It catalyses the reaction Preferential cleavage: hydrophobic, preferably aromatic, residues in P1 and P1' positions. Cleaves 1-Phe-|-Val-2, 4-Gln-|-His-5, 13-Glu-|-Ala-14, 14-Ala-|-Leu-15, 15-Leu-|-Tyr-16, 16-Tyr-|-Leu-17, 23-Gly-|-Phe-24, 24-Phe-|-Phe-25 and 25-Phe-|-Tyr-26 bonds in the B chain of insulin.. Its function is as follows. Shows particularly broad specificity; although bonds involving phenylalanine and leucine are preferred, many others are also cleaved to some extent. The polypeptide is Pepsin A-2/A-3 (Macaca fuscata fuscata (Japanese macaque)).